Here is a 515-residue protein sequence, read N- to C-terminus: Probable cytosol aminopeptidase (515 aa).

2 residues coordinate Mn(2+): Lys-274 and Asp-279. The active site involves Lys-286. Mn(2+) contacts are provided by Asp-297, Asp-356, and Glu-358. Arg-360 is a catalytic residue.

It belongs to the peptidase M17 family. It depends on Mn(2+) as a cofactor.

Its subcellular location is the cytoplasm. The enzyme catalyses Release of an N-terminal amino acid, Xaa-|-Yaa-, in which Xaa is preferably Leu, but may be other amino acids including Pro although not Arg or Lys, and Yaa may be Pro. Amino acid amides and methyl esters are also readily hydrolyzed, but rates on arylamides are exceedingly low.. It carries out the reaction Release of an N-terminal amino acid, preferentially leucine, but not glutamic or aspartic acids.. Presumably involved in the processing and regular turnover of intracellular proteins. Catalyzes the removal of unsubstituted N-terminal amino acids from various peptides. In Desulforapulum autotrophicum (strain ATCC 43914 / DSM 3382 / VKM B-1955 / HRM2) (Desulfobacterium autotrophicum), this protein is Probable cytosol aminopeptidase.